The chain runs to 227 residues: 2,3-bisphosphoglycerate-dependent phosphoglycerate mutase (227 aa).

Substrate contacts are provided by residues 7–14 (RHGLSEWN), 20–21 (TG), R59, 86–89 (ERHY), K97, 113–114 (RR), and 182–183 (GN). H8 acts as the Tele-phosphohistidine intermediate in catalysis. The Proton donor/acceptor role is filled by E86.

Belongs to the phosphoglycerate mutase family. BPG-dependent PGAM subfamily. In terms of assembly, homodimer.

It carries out the reaction (2R)-2-phosphoglycerate = (2R)-3-phosphoglycerate. It functions in the pathway carbohydrate degradation; glycolysis; pyruvate from D-glyceraldehyde 3-phosphate: step 3/5. Its function is as follows. Catalyzes the interconversion of 2-phosphoglycerate and 3-phosphoglycerate. This is 2,3-bisphosphoglycerate-dependent phosphoglycerate mutase from Mannheimia succiniciproducens (strain KCTC 0769BP / MBEL55E).